An 863-amino-acid chain; its full sequence is Leucine--tRNA ligase (863 aa).

Residues 42 to 52 (PYPSGKIHMGH) carry the 'HIGH' region motif. Positions 618–622 (KMSKS) match the 'KMSKS' region motif. Residue lysine 621 participates in ATP binding.

This sequence belongs to the class-I aminoacyl-tRNA synthetase family.

The protein localises to the cytoplasm. It catalyses the reaction tRNA(Leu) + L-leucine + ATP = L-leucyl-tRNA(Leu) + AMP + diphosphate. This chain is Leucine--tRNA ligase, found in Desulforapulum autotrophicum (strain ATCC 43914 / DSM 3382 / VKM B-1955 / HRM2) (Desulfobacterium autotrophicum).